The chain runs to 138 residues: Acidic phospholipase A2 Drk-a1 (138 aa).

Residues Met-1–Gly-16 form the signal peptide. 7 disulfide bridges follow: Cys-42–Cys-131, Cys-44–Cys-60, Cys-59–Cys-111, Cys-65–Cys-138, Cys-66–Cys-104, Cys-73–Cys-97, and Cys-91–Cys-102. Ca(2+) is bound by residues Tyr-43, Gly-45, and Gly-47. His-63 is an active-site residue. Residue Asp-64 coordinates Ca(2+). The active site involves Asp-105.

Belongs to the phospholipase A2 family. Group II subfamily. D49 sub-subfamily. Requires Ca(2+) as cofactor. In terms of tissue distribution, expressed by the venom gland.

It is found in the secreted. The enzyme catalyses a 1,2-diacyl-sn-glycero-3-phosphocholine + H2O = a 1-acyl-sn-glycero-3-phosphocholine + a fatty acid + H(+). In terms of biological role, snake venom phospholipase A2 (PLA2) that exhibits high hydrolytic activities and shows strong preference for the anionic micelles (dPPC with deoxycholate) to the zwitterionic micelles (dPPC with Triton X-100). PLA2 catalyzes the calcium-dependent hydrolysis of the 2-acyl groups in 3-sn-phosphoglycerides. This is Acidic phospholipase A2 Drk-a1 from Daboia russelii (Russel's viper).